A 1137-amino-acid polypeptide reads, in one-letter code: Calcium-activated potassium channel subunit alpha-1 (1137 aa).

Topologically, residues 1-44 are extracellular; it reads MSNNINANNLNTDSSSSPVNVPKMDALIIPVTMEVPCDSRGQRM. A helical membrane pass occupies residues 45–65; the sequence is WWAFLASSMVTFFGGLFIILL. At 66–137 the chain is on the cytoplasmic side; that stretch reads WRTLKYLWTV…MISAQTLTGR (72 aa). The helical transmembrane segment at 138–158 threads the bilayer; sequence VLVVLVFALSIGALVIYFIDS. The Extracellular portion of the chain corresponds to 159–173; it reads SNPIESCQNFYKDFT. Residues 174–194 form a helical membrane-spanning segment; sequence LQIDMAFNVFFLLYFGLRFIA. The Cytoplasmic portion of the chain corresponds to 195–198; it reads ANDK. A helical membrane pass occupies residues 199–219; that stretch reads LWFWLEVNSVVDFFTVPPVFV. The Extracellular portion of the chain corresponds to 220 to 223; the sequence is SVYL. A helical; Voltage-sensor transmembrane segment spans residues 224 to 244; that stretch reads NRSWLGLRFLRALRLIQFSEI. Over 245–259 the chain is Cytoplasmic; sequence LQFLNILKTSNSIKL. A helical membrane pass occupies residues 260 to 280; the sequence is VNLCSIFISTWLTAAGFIHLV. Residues 281-294 are Extracellular-facing; that stretch reads ENSGDPWENFQNNQ. The segment at residues 295–317 is an intramembrane region (pore-forming); it reads QLTYWECVYLLMVTMSTVGYGDV. Residues 311–314 carry the Selectivity for potassium motif; it reads TVGY. The Extracellular segment spans residues 318–326; it reads YAKTTLGRL. A helical transmembrane segment spans residues 327-347; that stretch reads FMVFFILGGLAMFASYVPEII. Over 348-1137 the chain is Cytoplasmic; that stretch reads ELIGNRKKYG…KQKYVQEDRL (790 aa). The 143-residue stretch at 366-508 folds into the RCK N-terminal 1 domain; the sequence is RKHIVVCGHI…WNWKEGDDAI (143 aa). Mg(2+) contacts are provided by glutamate 398, glutamine 421, and glutamate 423. Residues 515–535 form a segment S7 region; sequence LGFIAQSCLAPGLSTMLANLF. The segment S8 stretch occupies residues 572-592; the sequence is LSFPAVCELVFAKLKLLMIAI. Residues 636-640 form a heme-binding motif region; the sequence is CKACH. The tract at residues 660–688 is disordered; the sequence is EQPSTLSPKKKQRNGGMRNSPNSSPKLMR. Positions 738–758 are segment S9; that stretch reads VLSGHVVVCIFGDVKSALIGL. An RCK N-terminal 2 domain is found at 740 to 884; that stretch reads SGHVVVCIFG…MDRSSPDNSP (145 aa). Residues 904 to 926 carry the Calcium bowl motif; it reads TELVNDSNVQFLDQDDDDDPDTE. Glutamine 913, aspartate 916, aspartate 919, and aspartate 921 together coordinate Ca(2+). The interval 933–953 is segment S10; that stretch reads FACGTAFAVSVLDSLMSATYF. The span at 1088–1112 shows a compositional bias: low complexity; the sequence is ASLSHSSHSSYSSSKKSSSVHSIPS. Residues 1088-1137 are disordered; sequence ASLSHSSHSSYSSSKKSSSVHSIPSTANRPNRTKTRDSREKQKYVQEDRL. The segment covering 1121-1137 has biased composition (basic and acidic residues); sequence KTRDSREKQKYVQEDRL.

It belongs to the potassium channel family. Calcium-activated (TC 1.A.1.3) subfamily. KCa1.1/KCNMA1 sub-subfamily. In terms of assembly, homotetramer; which constitutes the calcium-activated potassium channel.

The protein localises to the cell membrane. It carries out the reaction K(+)(in) = K(+)(out). Its activity is regulated as follows. Ethanol and carbon monoxide-bound heme increase channel activation. Heme inhibits channel activation. Functionally, potassium channel activated by both membrane depolarization or increase in cytosolic Ca(2+) that mediates export of K(+). It is also activated by the concentration of cytosolic Mg(2+). Its activation dampens the excitatory events that elevate the cytosolic Ca(2+) concentration and/or depolarize the cell membrane. It therefore contributes to repolarization of the membrane potential. Plays a key role in controlling excitability in a number of systems, such as regulation of the contraction of smooth muscle, the tuning of hair cells in the cochlea, regulation of transmitter release, and innate immunity. In smooth muscles, its activation by high level of Ca(2+), caused by ryanodine receptors in the sarcoplasmic reticulum, regulates the membrane potential. In cochlea cells, its number and kinetic properties partly determine the characteristic frequency of each hair cell and thereby helps to establish a tonotopic map. Highly sensitive to both iberiotoxin (IbTx) and charybdotoxin (CTX). The protein is Calcium-activated potassium channel subunit alpha-1 (KCNMA1) of Gallus gallus (Chicken).